The chain runs to 174 residues: RNA pyrophosphohydrolase (174 aa).

The Nudix hydrolase domain maps to 6–149; sequence GFRANVGIII…KRDVYRKVMK (144 aa). Residues 38–59 carry the Nudix box motif; the sequence is GGVDDGESAEEAMYRELYEEVG.

The protein belongs to the Nudix hydrolase family. RppH subfamily. Requires a divalent metal cation as cofactor.

Its function is as follows. Accelerates the degradation of transcripts by removing pyrophosphate from the 5'-end of triphosphorylated RNA, leading to a more labile monophosphorylated state that can stimulate subsequent ribonuclease cleavage. The polypeptide is RNA pyrophosphohydrolase (Shewanella sp. (strain ANA-3)).